A 128-amino-acid polypeptide reads, in one-letter code: MFS18 protein (128 aa).

The N-terminal stretch at 1-25 (MARSSKMMVAARLLALALAVSTAEA) is a signal peptide. A disordered region spans residues 26–79 (RNIKTTTTEKKDDAVVQPQTFPPFDRLGGGASPAFGGLPGGSIPGSSIPGFSMP). Positions 52-68 (LGGGASPAFGGLPGGSI) are enriched in gly residues. 11 tandem repeats follow at residues 64-67 (PGGS), 64-75 (PGGSIPGSSIPG), 69-72 (PGSS), 69-80 (PGSSIPGFSMPG), 74-77 (PGFS), 79-82 (PGSG), 81-92 (SGSSLPGFSLPG), 86-89 (PGFS), 91-94 (PGSG), 104-107 (PGFS), and 113-116 (PGSP). A 3 X approximate tandem repeats region spans residues 64–92 (PGGSIPGSSIPGFSMPGSGSSLPGFSLPG). The tract at residues 64–116 (PGGSIPGSSIPGFSMPGSGSSLPGFSLPGSGTMPLFGGGSPGFSGFGGMPGSP) is 8 X 4 AA approximate repeats. A compositionally biased stretch (low complexity) spans 69–79 (PGSSIPGFSMP). Gly residues predominate over residues 99 to 113 (FGGGSPGFSGFGGMP). The segment at 99 to 128 (FGGGSPGFSGFGGMPGSPTAGSVPEHANKP) is disordered.

In terms of tissue distribution, enhanced expression in male flowers. Accumulates in the glumes and in anther walls, paleas and lemmas of mature florets.

In Zea mays (Maize), this protein is MFS18 protein (MFS18).